Here is a 302-residue protein sequence, read N- to C-terminus: Sulfate adenylyltransferase subunit 2 (302 aa).

This sequence belongs to the PAPS reductase family. CysD subfamily. In terms of assembly, heterodimer composed of CysD, the smaller subunit, and CysN.

The catalysed reaction is sulfate + ATP + H(+) = adenosine 5'-phosphosulfate + diphosphate. The protein operates within sulfur metabolism; hydrogen sulfide biosynthesis; sulfite from sulfate: step 1/3. In terms of biological role, with CysN forms the ATP sulfurylase (ATPS) that catalyzes the adenylation of sulfate producing adenosine 5'-phosphosulfate (APS) and diphosphate, the first enzymatic step in sulfur assimilation pathway. APS synthesis involves the formation of a high-energy phosphoric-sulfuric acid anhydride bond driven by GTP hydrolysis by CysN coupled to ATP hydrolysis by CysD. The sequence is that of Sulfate adenylyltransferase subunit 2 from Yersinia pestis bv. Antiqua (strain Nepal516).